A 255-amino-acid polypeptide reads, in one-letter code: tRNA (guanine-N(1)-)-methyltransferase (255 aa).

Residues Gly-113 and 133-138 (IGDYVL) each bind S-adenosyl-L-methionine.

Belongs to the RNA methyltransferase TrmD family. Homodimer.

The protein localises to the cytoplasm. It carries out the reaction guanosine(37) in tRNA + S-adenosyl-L-methionine = N(1)-methylguanosine(37) in tRNA + S-adenosyl-L-homocysteine + H(+). Specifically methylates guanosine-37 in various tRNAs. The sequence is that of tRNA (guanine-N(1)-)-methyltransferase from Escherichia coli O6:K15:H31 (strain 536 / UPEC).